The sequence spans 207 residues: Small ribosomal subunit protein uS7y (207 aa).

Position 2 is an N-acetylalanine (Ala2).

Belongs to the universal ribosomal protein uS7 family. Expressed in root tips, lateral root primordia, leaf primordia, shoot apical meristem and vasculature of cotyledons.

In Arabidopsis thaliana (Mouse-ear cress), this protein is Small ribosomal subunit protein uS7y.